Consider the following 411-residue polypeptide: Multidrug resistance protein MdtH (411 aa).

11 helical membrane passes run 13–33 (YFLL…FPLI), 45–65 (ALLV…LGIF), 73–95 (LGAK…FMGI), 99–116 (PWLL…GTLF), 139–159 (LLMI…SWLL), 165–185 (LVCL…AWLL), 213–233 (YVFT…ILPI), 243–263 (AAVR…LYPI), 288–308 (IIPI…GIFY), 340–360 (LGLA…YDMG), and 365–385 (IPQL…LGFY).

Belongs to the major facilitator superfamily. DHA1 family. MdtH (TC 2.A.1.2.21) subfamily.

The protein localises to the cell membrane. The sequence is that of Multidrug resistance protein MdtH from Baumannia cicadellinicola subsp. Homalodisca coagulata.